The primary structure comprises 619 residues: ATP-dependent DNA helicase RecQ (619 aa).

The 169-residue stretch at 37–205 (INAALNGQDA…LRHLNLKNLH (169 aa)) folds into the Helicase ATP-binding domain. 50–57 (MATGNGKS) provides a ligand contact to ATP. The DEAH box motif lies at 149–152 (DEAH). The Helicase C-terminal domain occupies 229–374 (QLTRFVLAQK…QIEQHKLEAI (146 aa)). Zn(2+) is bound by residues cysteine 383, cysteine 400, cysteine 403, and cysteine 406. The HRDC domain maps to 535–615 (ANYDKDLFAR…QEHKAILANA (81 aa)).

The protein belongs to the helicase family. RecQ subfamily. Requires Mg(2+) as cofactor. Zn(2+) is required as a cofactor.

The catalysed reaction is Couples ATP hydrolysis with the unwinding of duplex DNA by translocating in the 3'-5' direction.. The enzyme catalyses ATP + H2O = ADP + phosphate + H(+). An ATP-dependent DNA helicase which unwinds DNA in a 3'-5' direction. Plays a role in recombination. This is ATP-dependent DNA helicase RecQ from Haemophilus influenzae (strain ATCC 51907 / DSM 11121 / KW20 / Rd).